The sequence spans 540 residues: Receptor-interacting serine/threonine-protein kinase 2 (540 aa).

The Protein kinase domain maps to 18 to 294 (LADLRYLSRG…KCLIELEPVL (277 aa)). Residues 24-32 (LSRGASGTV) and K47 each bind ATP. Positions 65-73 (REAEILHKA) are helix alphaC. Residue D146 is the Proton acceptor of the active site. The activation segment (AS) stretch occupies residues 167–193 (LSKWRMMSLSQSRSSKSAPEGGTIVYM). S168 bears the Phosphoserine mark. Phosphoserine; alternate is present on S174. A Phosphoserine; by autocatalysis modification is found at S176. S178 carries the post-translational modification Phosphoserine; alternate. The residue at position 180 (S180) is a Phosphoserine. S181 is subject to Phosphoserine; alternate. Residue K209 forms a Glycyl lysine isopeptide (Lys-Gly) (interchain with G-Cter in ubiquitin) linkage. The tract at residues 318–367 (SRTVHLSDKKKRELSPNIPVNSGPREESCGSSQLHKTSGSPGTSRSLSAP) is disordered. Basic and acidic residues predominate over residues 322 to 331 (HLSDKKKREL). Residues 346–366 (CGSSQLHKTSGSPGTSRSLSA) are compositionally biased toward polar residues. Phosphoserine is present on residues S363 and S391. Residues 432–524 (GIAQQWIQSK…LQPYPEILVL (93 aa)) form the CARD domain. Y472 carries the phosphotyrosine; by autocatalysis modification. S525, S527, and S529 each carry phosphoserine. A Glycyl lysine isopeptide (Lys-Gly) (interchain with G-Cter in ubiquitin) cross-link involves residue K536. Residue S537 is modified to Phosphoserine.

Belongs to the protein kinase superfamily. TKL Ser/Thr protein kinase family. Interacts (via CARD domain) with NOD2 (via CARD domain). Interacts (via CARD domain) with NOD1 (via CARD domain). Homooligomer; following interaction with NOD1 or NOD2, homooligomerizes via its CARD domain and forms long filaments named RIPosomes. Found in a signaling complex consisting of at least ARHGEF2, NOD2 and RIPK2. Interacts with ARHGEF2; the interaction mediates tyrosine phosphorylation of RIPK2 by Src kinase CSK. Interacts with MAP3K4; this interaction sequesters RIPK2 from the NOD2 signaling pathway. Interacts with IKBKG/NEMO. The polyubiquitinated protein interacts with MAP3K7/TAK1; interaction is indirect and is mediated by TAB2 and TAB3 that bind to polyubiquitin chains attached to RIPK2. Binds to CFLAR/CLARP and CASP1 via their CARD domains. Binds to BIRC3/c-IAP1 and BIRC2/c-IAP2, TRAF1, TRAF2, TRAF5 and TRAF6. Interacts with NLRP10. Interacts with CARD9. Interacts with INAVA; the interaction takes place upon PRR stimulation. Interacts (via CARD domain) with NGFR (via death domain). Interacts with IRGM; promoting RIPK2 degradation. In terms of processing, polyubiquitinated via both 'Lys-63'- and 'Met-1'-linked polyubiquitin following recruitment by NOD1 or NOD2, creating docking sites for downstream effectors, triggering activation of the NF-kappa-B and MAP kinases signaling. 'Lys-63'-linked polyubiquitination by XIAP is essential for NOD2 signaling and promotes recruitment of the LUBAC complex. Also polyubiquitinated with 'Lys-63'-linked chains by PELI3, BIRC2/c-IAP1 and BIRC3/c-IAP2. Ubiquitinated on Lys-209 via 'Lys-63'-linked by ITCH. Undergoes 'Lys-63'-linked deubiquitination by MYSM1 to attenuate NOD2-mediated inflammation and tissue damage. Polyubiquitinated with 'Lys-63'-linked chains in response to Shigella infection, promoting its SQSTM1/p62-dependent autophagic degradation. Undergoes 'Met-1'-linked polyubiquitination; the head-to-tail linear polyubiquitination is mediated by the LUBAC complex in response to NOD2 stimulation 'Met-1'-linked polyubiquitination. 'Lys-63'-linked polyubiquitination by XIAP is required for recruimtent of the LUBAC complex and subsequent. Linear polyubiquitination is restricted by FAM105B/otulin, probably to limit NOD2-dependent pro-inflammatory signaling activation of NF-kappa-B. Post-translationally, autophosphorylated. Phosphorylated at Ser-176, either via autophosphorylation or by LRRK2, enhancing activity. Autophosphorylation at Tyr-472 is required for effective NOD2 signaling. Autophosphorylation is however not essential for NOD2 signaling. Degraded via selective autophagy following interaction with IRGM. IRGM promotes NOD1/NOD2-RIPK2 RIPosome recruitment to autophagosome membranes. RIPK2 biquitinated via 'Lys-63'-linked chains is then recognized by SQSTM1/p62, leading to the SQSTM1/p62-dependent autophagic degradation of the NOD1/NOD2-RIPK2 RIPosome.

Its subcellular location is the cytoplasm. It localises to the cell membrane. The protein localises to the endoplasmic reticulum. The catalysed reaction is L-seryl-[protein] + ATP = O-phospho-L-seryl-[protein] + ADP + H(+). It catalyses the reaction L-threonyl-[protein] + ATP = O-phospho-L-threonyl-[protein] + ADP + H(+). It carries out the reaction L-tyrosyl-[protein] + ATP = O-phospho-L-tyrosyl-[protein] + ADP + H(+). With respect to regulation, in the inactive state, the helix alphaC is packed against the helical, non-phosphorylated activation segment (AS). Upon activation, helix alphaC is displaced and the phosphorylated AS becomes disordered. In terms of biological role, serine/threonine/tyrosine-protein kinase that plays an essential role in modulation of innate and adaptive immune responses. Acts as a key effector of NOD1 and NOD2 signaling pathways: upon activation by bacterial peptidoglycans, NOD1 and NOD2 oligomerize and recruit RIPK2 via CARD-CARD domains, leading to the formation of RIPK2 filaments. Once recruited, RIPK2 autophosphorylates and undergoes 'Lys-63'-linked polyubiquitination by E3 ubiquitin ligases XIAP, BIRC2 and BIRC3, as well as 'Met-1'-linked (linear) polyubiquitination by the LUBAC complex, becoming a scaffolding protein for downstream effectors. 'Met-1'-linked polyubiquitin chains attached to RIPK2 recruit IKBKG/NEMO, which undergoes 'Lys-63'-linked polyubiquitination in a RIPK2-dependent process. 'Lys-63'-linked polyubiquitin chains attached to RIPK2 serve as docking sites for TAB2 and TAB3 and mediate the recruitment of MAP3K7/TAK1 to IKBKG/NEMO, inducing subsequent activation of IKBKB/IKKB. In turn, NF-kappa-B is released from NF-kappa-B inhibitors and translocates into the nucleus where it activates the transcription of hundreds of genes involved in immune response, growth control, or protection against apoptosis. The protein kinase activity is dispensable for the NOD1 and NOD2 signaling pathways. Contributes to the tyrosine phosphorylation of the guanine exchange factor ARHGEF2 through Src tyrosine kinase leading to NF-kappa-B activation by NOD2. Also involved in adaptive immunity: plays a role during engagement of the T-cell receptor (TCR) in promoting BCL10 phosphorylation and subsequent NF-kappa-B activation. Plays a role in the inactivation of RHOA in response to NGFR signaling. The chain is Receptor-interacting serine/threonine-protein kinase 2 (RIPK2) from Bos taurus (Bovine).